The sequence spans 728 residues: Catalase-peroxidase 1 (728 aa).

Residues 1 to 22 (MDKTQSSQGKCPVMHGANSAVA) form the signal peptide. Residues 97-225 (WHSAGTYRVA…LAAVMMGLIY (129 aa)) constitute a cross-link (tryptophyl-tyrosyl-methioninium (Trp-Tyr) (with M-251)). The Proton acceptor role is filled by His98. Positions 225 to 251 (YVNPEGVDGKPDPLRTAQDVRVTFARM) form a cross-link, tryptophyl-tyrosyl-methioninium (Tyr-Met) (with W-97). His266 is a binding site for heme b.

This sequence belongs to the peroxidase family. Peroxidase/catalase subfamily. Homodimer or homotetramer. It depends on heme b as a cofactor. Formation of the three residue Trp-Tyr-Met cross-link is important for the catalase, but not the peroxidase activity of the enzyme.

The enzyme catalyses H2O2 + AH2 = A + 2 H2O. It carries out the reaction 2 H2O2 = O2 + 2 H2O. Bifunctional enzyme with both catalase and broad-spectrum peroxidase activity. The polypeptide is Catalase-peroxidase 1 (Shewanella sp. (strain MR-7)).